The sequence spans 217 residues: MWLIVGLGNPGDTYARTRHNIGFRVVSELAQRHRLEFTHKRAHARIAEGIIAGQRVALALPQTYMNLSGQAVVGLRQWYKIDPATELLVVYDDVDLPFGVLRLRERGSAGTHNGMRSIITLLGSQVFPRLRIGIDRPPPAWDLADYVLGRFTPEQEAQLPDIMQKAADALETVVREGMAVAMNRINAPPPKPKREQKRSSDAPDSSSDTNTSNASDG.

TRNA is bound at residue Y14. H19 acts as the Proton acceptor in catalysis. Y64, N66, and N113 together coordinate tRNA. The segment at M182–G217 is disordered. Low complexity predominate over residues A202–G217.

It belongs to the PTH family. In terms of assembly, monomer.

It localises to the cytoplasm. It carries out the reaction an N-acyl-L-alpha-aminoacyl-tRNA + H2O = an N-acyl-L-amino acid + a tRNA + H(+). In terms of biological role, hydrolyzes ribosome-free peptidyl-tRNAs (with 1 or more amino acids incorporated), which drop off the ribosome during protein synthesis, or as a result of ribosome stalling. Functionally, catalyzes the release of premature peptidyl moieties from peptidyl-tRNA molecules trapped in stalled 50S ribosomal subunits, and thus maintains levels of free tRNAs and 50S ribosomes. The protein is Peptidyl-tRNA hydrolase of Roseiflexus sp. (strain RS-1).